The sequence spans 116 residues: Fluoride-specific ion channel FluC 2 (116 aa).

The next 2 membrane-spanning stretches (helical) occupy residues 3–23 (LLTA…RYAV) and 43–63 (LLFG…AVTV). G67 and T70 together coordinate Na(+). A helical membrane pass occupies residues 96–116 (VGTLAAALLAVFLGIALGAAL).

The protein belongs to the fluoride channel Fluc/FEX (TC 1.A.43) family.

It is found in the cell membrane. The catalysed reaction is fluoride(in) = fluoride(out). Its activity is regulated as follows. Na(+) is not transported, but it plays an essential structural role and its presence is essential for fluoride channel function. In terms of biological role, fluoride-specific ion channel. Important for reducing fluoride concentration in the cell, thus reducing its toxicity. The protein is Fluoride-specific ion channel FluC 2 of Natronomonas pharaonis (strain ATCC 35678 / DSM 2160 / CIP 103997 / JCM 8858 / NBRC 14720 / NCIMB 2260 / Gabara) (Halobacterium pharaonis).